The following is a 189-amino-acid chain: Large ribosomal subunit protein bL9 (189 aa).

This sequence belongs to the bacterial ribosomal protein bL9 family.

In terms of biological role, binds to the 23S rRNA. This chain is Large ribosomal subunit protein bL9, found in Cereibacter sphaeroides (strain ATCC 17023 / DSM 158 / JCM 6121 / CCUG 31486 / LMG 2827 / NBRC 12203 / NCIMB 8253 / ATH 2.4.1.) (Rhodobacter sphaeroides).